The following is a 240-amino-acid chain: MSGESSRSLGKGSAPPGPVPEGQIRVYSMRFCPFAQRTLMVLKAKGIRHEVININLKNKPEWFFEKNPLGLVPVLENSQGHLVTESVITCEYLDEAYPEKKLFPDDPYKKARQKMTLESFSKVPPLIASFVRSKRKEDSPNLREALENEFKKLEEGMDNYKSFLGGDSPSMVDYLTWPWFQRLEALELKECLAHTPKLKLWMAAMQQDPVASSHKIDAKTYREYLNLYLQDSPEACDYGL.

An N-acetylserine modification is found at serine 2. The GST N-terminal domain maps to 22–101 (GQIRVYSMRF…YLDEAYPEKK (80 aa)). The active-site Nucleophile is the cysteine 32. Lysine 57 bears the N6-acetyllysine mark. Residues lysine 59, valine 72, and 85–86 (ES) contribute to the glutathione site. The GST C-terminal domain occupies 106–227 (DPYKKARQKM…AKTYREYLNL (122 aa)). Serine 129 carries the phosphoserine modification. Lysine 152 carries the N6-acetyllysine modification.

The protein belongs to the GST superfamily. Omega family. In terms of assembly, homodimer.

The protein resides in the cytoplasm. It localises to the cytosol. It carries out the reaction RX + glutathione = an S-substituted glutathione + a halide anion + H(+). The catalysed reaction is L-dehydroascorbate + 2 glutathione = glutathione disulfide + L-ascorbate. The enzyme catalyses methylarsonate + 2 glutathione + H(+) = methylarsonous acid + glutathione disulfide + H2O. Functionally, exhibits glutathione-dependent thiol transferase and dehydroascorbate reductase activities. Has S-(phenacyl)glutathione reductase activity. Also has glutathione S-transferase activity. Participates in the biotransformation of inorganic arsenic and reduces monomethylarsonic acid (MMA) and dimethylarsonic acid. The protein is Glutathione S-transferase omega-1 (Gsto1) of Mus musculus (Mouse).